Reading from the N-terminus, the 173-residue chain is MGKPCHFAQFDLQPTFLVDLDELGRRYRELVRSVHPDRFADAPEREQRLALERAAQLNDAYQTLKSAPRRALYLLTLNGRELPLEATVQDPEFLLQQMQLREELEELQDSADLAGVATFKRQLKAAQAELEGEFAACWDDARRREEAERLVRRMQFLDKLAQEVRQLEERLDD.

The 73-residue stretch at cysteine 5 to leucine 77 folds into the J domain.

The protein belongs to the HscB family. Interacts with HscA and stimulates its ATPase activity.

Functionally, co-chaperone involved in the maturation of iron-sulfur cluster-containing proteins. Seems to help targeting proteins to be folded toward HscA. The sequence is that of Co-chaperone protein HscB homolog from Pseudomonas paraeruginosa (strain DSM 24068 / PA7) (Pseudomonas aeruginosa (strain PA7)).